Here is a 244-residue protein sequence, read N- to C-terminus: Biosynthetic peptidoglycan transglycosylase (244 aa).

A helical membrane pass occupies residues 25–45 (LLLLLTAALLYQSWFLLHIVY).

The protein belongs to the glycosyltransferase 51 family.

Its subcellular location is the cell inner membrane. It catalyses the reaction [GlcNAc-(1-&gt;4)-Mur2Ac(oyl-L-Ala-gamma-D-Glu-L-Lys-D-Ala-D-Ala)](n)-di-trans,octa-cis-undecaprenyl diphosphate + beta-D-GlcNAc-(1-&gt;4)-Mur2Ac(oyl-L-Ala-gamma-D-Glu-L-Lys-D-Ala-D-Ala)-di-trans,octa-cis-undecaprenyl diphosphate = [GlcNAc-(1-&gt;4)-Mur2Ac(oyl-L-Ala-gamma-D-Glu-L-Lys-D-Ala-D-Ala)](n+1)-di-trans,octa-cis-undecaprenyl diphosphate + di-trans,octa-cis-undecaprenyl diphosphate + H(+). It participates in cell wall biogenesis; peptidoglycan biosynthesis. Peptidoglycan polymerase that catalyzes glycan chain elongation from lipid-linked precursors. The polypeptide is Biosynthetic peptidoglycan transglycosylase (Nitrosomonas europaea (strain ATCC 19718 / CIP 103999 / KCTC 2705 / NBRC 14298)).